We begin with the raw amino-acid sequence, 447 residues long: Na(+)-translocating NADH-quinone reductase subunit A (447 aa).

Belongs to the NqrA family. Composed of six subunits; NqrA, NqrB, NqrC, NqrD, NqrE and NqrF.

It carries out the reaction a ubiquinone + n Na(+)(in) + NADH + H(+) = a ubiquinol + n Na(+)(out) + NAD(+). NQR complex catalyzes the reduction of ubiquinone-1 to ubiquinol by two successive reactions, coupled with the transport of Na(+) ions from the cytoplasm to the periplasm. NqrA to NqrE are probably involved in the second step, the conversion of ubisemiquinone to ubiquinol. The protein is Na(+)-translocating NADH-quinone reductase subunit A of Cellvibrio japonicus (strain Ueda107) (Pseudomonas fluorescens subsp. cellulosa).